Reading from the N-terminus, the 560-residue chain is Membrane protein insertase YidC (560 aa).

Residues 1–21 traverse the membrane as a helical segment; that stretch reads MDIKRTILIAALAIVSYVMVL. The disordered stretch occupies residues 42–66; it reads VAPGLPDGVPAANNGASADVPSANA. A run of 5 helical transmembrane segments spans residues 341 to 361, 367 to 387, 437 to 457, 468 to 488, and 515 to 535; these read LELT…FWLL, LLGN…GLFF, LGGC…YWVL, WMLW…PIIM, and PIIF…YWVV.

This sequence belongs to the OXA1/ALB3/YidC family. Type 1 subfamily. As to quaternary structure, interacts with the Sec translocase complex via SecD. Specifically interacts with transmembrane segments of nascent integral membrane proteins during membrane integration.

It is found in the cell inner membrane. Its function is as follows. Required for the insertion and/or proper folding and/or complex formation of integral membrane proteins into the membrane. Involved in integration of membrane proteins that insert both dependently and independently of the Sec translocase complex, as well as at least some lipoproteins. Aids folding of multispanning membrane proteins. This Pseudomonas putida (strain W619) protein is Membrane protein insertase YidC.